A 321-amino-acid polypeptide reads, in one-letter code: MSEKLQKVLARAGHGSRRELEALIRAGRVSVNGKVAVLGERLEDDNAVVRIDGHVVSVKAQEEVICRVLAYYKPEGELCTRHDPEGRRTVFDRLPKIRGSRWISVGRLDANTSGLLLFTTDGELANRLMHPSRQVEREYLVRVFGDVTEEKVRNLVRGVQLEDGMARFEDVMYAGGEGINHTFYVVINEGRNREVRRLWESQGTTVSRLKRVRYGDIFLDKKLPRGGWMELDLKQVNYLRELVELRPEKETVLNMAPDAATRKRERTRSQKIRRAVRRHEERISATPGRSGKAPARRKPGGESSTRNKVANQQQSSRKPRG.

The region spanning 3–68 (EKLQKVLARA…KAQEEVICRV (66 aa)) is the S4 RNA-binding domain. Asp-109 functions as the Nucleophile in the catalytic mechanism. The tract at residues 254–321 (NMAPDAATRK…QQQSSRKPRG (68 aa)) is disordered. Residues 263 to 277 (KRERTRSQKIRRAVR) show a composition bias toward basic residues. The span at 302-321 (ESSTRNKVANQQQSSRKPRG) shows a compositional bias: polar residues.

This sequence belongs to the pseudouridine synthase RsuA family.

The catalysed reaction is uridine(2605) in 23S rRNA = pseudouridine(2605) in 23S rRNA. Its function is as follows. Responsible for synthesis of pseudouridine from uracil-2605 in 23S ribosomal RNA. The polypeptide is Ribosomal large subunit pseudouridine synthase B (rluB) (Vibrio cholerae serotype O1 (strain ATCC 39315 / El Tor Inaba N16961)).